Here is a 533-residue protein sequence, read N- to C-terminus: Hydroxylamine reductase (533 aa).

Cys3, Cys6, Cys15, and Cys21 together coordinate [4Fe-4S] cluster. Residues His234, Glu258, Cys302, Cys389, Cys417, Cys442, Glu476, and Lys478 each coordinate hybrid [4Fe-2O-2S] cluster. Cys389 is subject to Cysteine persulfide.

This sequence belongs to the HCP family. [4Fe-4S] cluster is required as a cofactor. The cofactor is hybrid [4Fe-2O-2S] cluster.

Its subcellular location is the cytoplasm. The catalysed reaction is A + NH4(+) + H2O = hydroxylamine + AH2 + H(+). Functionally, catalyzes the reduction of hydroxylamine to form NH(3) and H(2)O. The polypeptide is Hydroxylamine reductase (Maridesulfovibrio salexigens (strain ATCC 14822 / DSM 2638 / NCIMB 8403 / VKM B-1763) (Desulfovibrio salexigens)).